A 340-amino-acid chain; its full sequence is N-acetyl-gamma-glutamyl-phosphate reductase (340 aa).

The active site involves Cys149.

Belongs to the NAGSA dehydrogenase family. Type 1 subfamily.

The protein localises to the cytoplasm. The catalysed reaction is N-acetyl-L-glutamate 5-semialdehyde + phosphate + NADP(+) = N-acetyl-L-glutamyl 5-phosphate + NADPH + H(+). The protein operates within amino-acid biosynthesis; L-arginine biosynthesis; N(2)-acetyl-L-ornithine from L-glutamate: step 3/4. Catalyzes the NADPH-dependent reduction of N-acetyl-5-glutamyl phosphate to yield N-acetyl-L-glutamate 5-semialdehyde. This chain is N-acetyl-gamma-glutamyl-phosphate reductase, found in Vesicomyosocius okutanii subsp. Calyptogena okutanii (strain HA).